A 516-amino-acid polypeptide reads, in one-letter code: Flavin-dependent halogenase armH2 (516 aa).

Gly16, Ala19, and Glu49 together coordinate FAD. Residues Ser328 and Gly329 each coordinate chloride. Ile330 lines the FAD pocket. Residues 440–475 are disordered; sequence PQANGNGAAKQDAVPAPIPVALSSGAGPEKDAKRRE.

Belongs to the flavin-dependent halogenase family.

It catalyses the reaction melleolide F + FADH2 + chloride + O2 = 6'-chloromelleolide F + FAD + 2 H2O + H(+). In terms of biological role, flavin-dependent halogenase involved in the biosynthesis of melleolides, a range of antifungal and phytotoxic polyketide derivatives composed of an orsellinic acid (OA) moiety esterified to various sesquiterpene alcohols. The halogenase catalyzes the transfer of a single chlorine atom to the melleolide backbone, resulting in a 6'-chloromelleolide product. The enzyme acts on free substrate and does not depend on carrier-protein-dependent acceptor molecules. The protein is Flavin-dependent halogenase armH2 of Armillaria mellea (Honey mushroom).